Consider the following 1347-residue polypeptide: Spermatogenesis-associated protein 31A7 (1347 aa).

The helical transmembrane segment at 23 to 43 (PWVLDIFLTLVFALGFFFLLL) threads the bilayer. Disordered regions lie at residues 55-88 (PSPSPGKRKCPVGRRRRPRGRMKNHSLRAGRECP), 106-233 (GPHL…RDST), 374-397 (QDTTNPKPFWNMGENSKQLPGPQK), 628-658 (DESPGTSQAKGKPSPWQSSMSTGESSKEAQK), 900-955 (RGIP…REAV), 1084-1161 (VHEE…PSVS), and 1313-1335 (KAVSPVSPPQHWPKTSGASSHHH). Over residues 60 to 82 (GKRKCPVGRRRRPRGRMKNHSLR) the composition is skewed to basic residues. Positions 165-178 (LASTPSPGPMTTSV) are enriched in polar residues. Positions 198–211 (PEPPALFPHPPHTP) are enriched in pro residues. Polar residues-rich tracts occupy residues 631-651 (PGTSQAKGKPSPWQSSMSTGE) and 927-948 (LTYSLTGSIQQSRSLGAQSSKA). Basic and acidic residues-rich tracts occupy residues 1108-1127 (HKSEKSRKPNLEKHEERLEG) and 1137-1146 (RKTEDTHQDE).

It belongs to the SPATA31 family.

Its subcellular location is the membrane. Its function is as follows. May play a role in spermatogenesis. The protein is Spermatogenesis-associated protein 31A7 of Homo sapiens (Human).